The chain runs to 179 residues: Large ribosomal subunit protein uL5 (179 aa).

This sequence belongs to the universal ribosomal protein uL5 family. Part of the 50S ribosomal subunit; part of the 5S rRNA/L5/L18/L25 subcomplex. Contacts the 5S rRNA and the P site tRNA. Forms a bridge to the 30S subunit in the 70S ribosome.

In terms of biological role, this is one of the proteins that bind and probably mediate the attachment of the 5S RNA into the large ribosomal subunit, where it forms part of the central protuberance. In the 70S ribosome it contacts protein S13 of the 30S subunit (bridge B1b), connecting the 2 subunits; this bridge is implicated in subunit movement. Contacts the P site tRNA; the 5S rRNA and some of its associated proteins might help stabilize positioning of ribosome-bound tRNAs. The protein is Large ribosomal subunit protein uL5 of Staphylococcus haemolyticus (strain JCSC1435).